We begin with the raw amino-acid sequence, 358 residues long: Pituitary-specific positive transcription factor 1 (358 aa).

The 9aaTAD signature appears at 5–12 (AFSADSFT). Residues 164–195 (PAVLSEEPPLGGTKDLRLRSRPPDDPPDMDSP) are disordered. Basic and acidic residues predominate over residues 177 to 187 (KDLRLRSRPPD). Positions 192–266 (MDSPQIRELE…ILAKWLDEAE (75 aa)) constitute a POU-specific domain. The segment at residues 282 to 341 (KRKRRTTISLGAKEALERSFGEKIKPSSQEIVRMAEGLHLEKEVVRVWFCNRRQREKRVK) is a DNA-binding region (homeobox).

Belongs to the POU transcription factor family. Class-1 subfamily.

The protein localises to the nucleus. Transcription factor that activates growth hormone and prolactin genes. Specifically binds to the consensus sequence 5'-TAAAT-3'. In Oncorhynchus mykiss (Rainbow trout), this protein is Pituitary-specific positive transcription factor 1 (pou1f1).